We begin with the raw amino-acid sequence, 604 residues long: Putative sodium-dependent multivitamin transporter (604 aa).

Transmembrane regions (helical) follow at residues 4 to 24, 48 to 68, 78 to 98, 134 to 154, 160 to 180, and 188 to 208; these read LGAW…AIGI, VAPV…ILGV, MFVV…YLII, VLYM…VTGL, IVIV…KAVL, and LLMF…AGSL. Asn-222 and Asn-225 each carry an N-linked (GlcNAc...) asparagine glycan. The next 7 membrane-spanning stretches (helical) occupy residues 234–254, 273–293, 331–351, 389–409, 413–433, 440–460, and 511–531; these read HTWF…YGVN, ALWW…FSGL, LAGL…SSII, LFFG…GGLL, LSIF…GMYV, GAIG…FGQP, and ALGF…FALL.

This sequence belongs to the sodium:solute symporter (SSF) (TC 2.A.21) family.

It localises to the cell membrane. In Drosophila melanogaster (Fruit fly), this protein is Putative sodium-dependent multivitamin transporter.